A 283-amino-acid chain; its full sequence is Large ribosomal subunit protein uL4 (283 aa).

Belongs to the universal ribosomal protein uL4 family. In terms of assembly, part of the 50S ribosomal subunit.

In terms of biological role, one of the primary rRNA binding proteins, this protein initially binds near the 5'-end of the 23S rRNA. It is important during the early stages of 50S assembly. It makes multiple contacts with different domains of the 23S rRNA in the assembled 50S subunit and ribosome. Functionally, forms part of the polypeptide exit tunnel. The polypeptide is Large ribosomal subunit protein uL4 (Pyrobaculum aerophilum (strain ATCC 51768 / DSM 7523 / JCM 9630 / CIP 104966 / NBRC 100827 / IM2)).